The following is a 299-amino-acid chain: N-acetylneuraminate lyase (299 aa).

Aceneuramate-binding residues include S45 and S46. Y134 functions as the Proton donor in the catalytic mechanism. Catalysis depends on K161, which acts as the Schiff-base intermediate with substrate. Residues T163, G185, D187, and E188 each coordinate aceneuramate.

It belongs to the DapA family. NanA subfamily. As to quaternary structure, homotetramer.

The protein resides in the cytoplasm. The enzyme catalyses aceneuramate = aldehydo-N-acetyl-D-mannosamine + pyruvate. It participates in amino-sugar metabolism; N-acetylneuraminate degradation; D-fructose 6-phosphate from N-acetylneuraminate: step 1/5. Functionally, catalyzes the reversible aldol cleavage of N-acetylneuraminic acid (sialic acid; Neu5Ac) to form pyruvate and N-acetylmannosamine (ManNAc) via a Schiff base intermediate. The sequence is that of N-acetylneuraminate lyase from Rhizobium meliloti (strain 1021) (Ensifer meliloti).